Consider the following 396-residue polypeptide: MSDSITNPENSEIQTNYDKIVHKFDELKLKEVLLRGIYGYGFVDPSAIQQRAILPIIEGHDVLAQAQSGTGKTGTFSIAALQRIDESIKAPQALILAPTRELALQIQKVVMALALHMDVKVHACIGGTDPREDAEALRAGAQIVVGTPGRVFDMIERRNFKTDHIKMFILDEADEMLSSGFKEQIYKIFTMLPPTTQVVLLSATMPKEVLDVTDKFMNKPVRILVKKDALTLEGIQQYYINVESEEYKYDCLSDLYDSISVTQAVIFCNTRRKVEELTKRLTDDSFTVSAIYSDLPQAQRDTIMKEFRTGSSRILISTDLLARGIDVQQVSLVINYDLPNNKENYIHRIGRGGRFGRKGVAINLVTDRDVGDMRELERFYSTQIEELPANIADLFD.

The Q motif motif lies at 22-50; that stretch reads HKFDELKLKEVLLRGIYGYGFVDPSAIQQ. In terms of domain architecture, Helicase ATP-binding spans 53 to 223; the sequence is ILPIIEGHDV…DKFMNKPVRI (171 aa). An ATP-binding site is contributed by 66 to 73; the sequence is AQSGTGKT. The short motif at 171–174 is the DEAD box element; sequence DEAD. Positions 234-395 constitute a Helicase C-terminal domain; the sequence is GIQQYYINVE…ELPANIADLF (162 aa).

The protein belongs to the DEAD box helicase family. eIF4A subfamily. As to quaternary structure, component of the eIF4F complex, which composition varies with external and internal environmental conditions. It is composed of at least eIF4A, eIF4E and eIF4G.

The protein resides in the cytoplasm. It carries out the reaction ATP + H2O = ADP + phosphate + H(+). In terms of biological role, ATP-dependent RNA helicase which is a subunit of the eIF4F complex involved in cap recognition and is required for mRNA binding to ribosome. In the current model of translation initiation, eIF4A unwinds RNA secondary structures in the 5'-UTR of mRNAs which is necessary to allow efficient binding of the small ribosomal subunit, and subsequent scanning for the initiator codon. This Eremothecium gossypii (strain ATCC 10895 / CBS 109.51 / FGSC 9923 / NRRL Y-1056) (Yeast) protein is ATP-dependent RNA helicase eIF4A (TIF1).